The sequence spans 572 residues: Proline--tRNA ligase (572 aa).

This sequence belongs to the class-II aminoacyl-tRNA synthetase family. ProS type 1 subfamily. As to quaternary structure, homodimer.

Its subcellular location is the cytoplasm. The enzyme catalyses tRNA(Pro) + L-proline + ATP = L-prolyl-tRNA(Pro) + AMP + diphosphate. Its function is as follows. Catalyzes the attachment of proline to tRNA(Pro) in a two-step reaction: proline is first activated by ATP to form Pro-AMP and then transferred to the acceptor end of tRNA(Pro). As ProRS can inadvertently accommodate and process non-cognate amino acids such as alanine and cysteine, to avoid such errors it has two additional distinct editing activities against alanine. One activity is designated as 'pretransfer' editing and involves the tRNA(Pro)-independent hydrolysis of activated Ala-AMP. The other activity is designated 'posttransfer' editing and involves deacylation of mischarged Ala-tRNA(Pro). The misacylated Cys-tRNA(Pro) is not edited by ProRS. The protein is Proline--tRNA ligase of Escherichia coli O17:K52:H18 (strain UMN026 / ExPEC).